Consider the following 330-residue polypeptide: Aspartate--ammonia ligase (330 aa).

It belongs to the class-II aminoacyl-tRNA synthetase family. AsnA subfamily.

It localises to the cytoplasm. It catalyses the reaction L-aspartate + NH4(+) + ATP = L-asparagine + AMP + diphosphate + H(+). The protein operates within amino-acid biosynthesis; L-asparagine biosynthesis; L-asparagine from L-aspartate (ammonia route): step 1/1. This Treponema pallidum (strain Nichols) protein is Aspartate--ammonia ligase.